The chain runs to 115 residues: Transcriptional regulator protein FixT (115 aa).

In terms of assembly, interacts directly with FixL.

Prevents transcription of the intermediate key regulatory genes nifA and fixK by counteracting the activity of the FixLJ two-component system. Acts as an inhibitor of the sensor hemoprotein kinase fixL, preventing the production or the accumulation of its phosphorylated form. The polypeptide is Transcriptional regulator protein FixT (fixT) (Rhizobium meliloti (strain 1021) (Ensifer meliloti)).